Consider the following 104-residue polypeptide: Pyrimidine/purine nucleoside phosphorylase (104 aa).

Belongs to the nucleoside phosphorylase PpnP family.

The enzyme catalyses a purine D-ribonucleoside + phosphate = a purine nucleobase + alpha-D-ribose 1-phosphate. It catalyses the reaction adenosine + phosphate = alpha-D-ribose 1-phosphate + adenine. The catalysed reaction is cytidine + phosphate = cytosine + alpha-D-ribose 1-phosphate. It carries out the reaction guanosine + phosphate = alpha-D-ribose 1-phosphate + guanine. The enzyme catalyses inosine + phosphate = alpha-D-ribose 1-phosphate + hypoxanthine. It catalyses the reaction thymidine + phosphate = 2-deoxy-alpha-D-ribose 1-phosphate + thymine. The catalysed reaction is uridine + phosphate = alpha-D-ribose 1-phosphate + uracil. It carries out the reaction xanthosine + phosphate = alpha-D-ribose 1-phosphate + xanthine. In terms of biological role, catalyzes the phosphorolysis of diverse nucleosides, yielding D-ribose 1-phosphate and the respective free bases. Can use uridine, adenosine, guanosine, cytidine, thymidine, inosine and xanthosine as substrates. Also catalyzes the reverse reactions. The chain is Pyrimidine/purine nucleoside phosphorylase from Herminiimonas arsenicoxydans.